The following is a 568-amino-acid chain: Protein AF-9 (568 aa).

Residues Met-1 to Ala-138 enclose the YEATS domain. Histone H3K9cr binding stretches follow at residues Tyr-78–Gly-80 and Leu-106–Leu-108. Residues Ala-138–Asn-475 are disordered. The segment covering Ser-149–Ser-190 has biased composition (low complexity). The span at Glu-202–Pro-265 shows a compositional bias: basic and acidic residues. Ser-288 and Ser-294 each carry phosphoserine. A Nuclear localization signal motif is present at residues Ala-295–Lys-300. Positions Ser-303 to Ala-313 are enriched in low complexity. Residues Ala-322–Lys-349 are compositionally biased toward basic and acidic residues. Lys-339 is covalently cross-linked (Glycyl lysine isopeptide (Lys-Gly) (interchain with G-Cter in SUMO2)). Over residues Asp-357–Glu-368 the composition is skewed to acidic residues. Residues Ser-371–Ser-395 are compositionally biased toward low complexity. Ser-412 and Ser-419 each carry phosphoserine. A compositionally biased stretch (acidic residues) spans Asp-414 to Ser-429. The segment covering Val-445–Pro-461 has biased composition (low complexity). Phosphoserine is present on Ser-483.

As to quaternary structure, component of the super elongation complex (SEC), at least composed of EAF1, EAF2, CDK9, MLLT3/AF9, AFF (AFF1 or AFF4), the P-TEFb complex and ELL (ELL, ELL2 or ELL3). Interacts with BCOR. Interacts with CBX8. Interacts with ALKBH4. Enriched in undifferentiated hematopoietic stem cells in fetal liver, cord blood and bone marrow.

It is found in the nucleus. Its subcellular location is the chromosome. Its activity is regulated as follows. Crotonylated lysine binding is strongly inhibited by the peptide XL-07i, carrying a 2-furancarbonyl side chain and capped with a hydrophobic carboxybenzyl group. XL-07i targets the unique pi-pi-pi stacking interaction at the crotonylation recognition site. Its function is as follows. Chromatin reader component of the super elongation complex (SEC), a complex required to increase the catalytic rate of RNA polymerase II transcription by suppressing transient pausing by the polymerase at multiple sites along the DNA. Specifically recognizes and binds acylated histone H3, with a preference for histone H3 that is crotonylated. Crotonylation marks active promoters and enhancers and confers resistance to transcriptional repressors. Recognizes and binds histone H3 crotonylated at 'Lys-9' (H3K9cr), and with slightly lower affinity histone H3 crotonylated at 'Lys-18' (H3K18cr). Also recognizes and binds histone H3 acetylated and butyrylated at 'Lys-9' (H3K9ac and H3K9bu, respectively), but with lower affinity than crotonylated histone H3. In the SEC complex, MLLT3 is required to recruit the complex to crotonylated histones. Recruitment of the SEC complex to crotonylated histones promotes recruitment of DOT1L on active chromatin to deposit histone H3 'Lys-79' methylation (H3K79me). Plays a key role in hematopoietic stem cell (HSC) maintenance by preserving, rather than conferring, HSC stemness. Acts by binding to the transcription start site of active genes in HSCs and sustaining level of H3K79me2, probably by recruiting DOT1L. This is Protein AF-9 from Homo sapiens (Human).